Reading from the N-terminus, the 557-residue chain is 2-succinyl-5-enolpyruvyl-6-hydroxy-3-cyclohexene-1-carboxylate synthase (557 aa).

It belongs to the TPP enzyme family. MenD subfamily. In terms of assembly, homodimer. Requires Mg(2+) as cofactor. It depends on Mn(2+) as a cofactor. Thiamine diphosphate serves as cofactor.

The catalysed reaction is isochorismate + 2-oxoglutarate + H(+) = 5-enolpyruvoyl-6-hydroxy-2-succinyl-cyclohex-3-ene-1-carboxylate + CO2. The protein operates within quinol/quinone metabolism; 1,4-dihydroxy-2-naphthoate biosynthesis; 1,4-dihydroxy-2-naphthoate from chorismate: step 2/7. It participates in quinol/quinone metabolism; menaquinone biosynthesis. In terms of biological role, catalyzes the thiamine diphosphate-dependent decarboxylation of 2-oxoglutarate and the subsequent addition of the resulting succinic semialdehyde-thiamine pyrophosphate anion to isochorismate to yield 2-succinyl-5-enolpyruvyl-6-hydroxy-3-cyclohexene-1-carboxylate (SEPHCHC). The sequence is that of 2-succinyl-5-enolpyruvyl-6-hydroxy-3-cyclohexene-1-carboxylate synthase from Staphylococcus aureus (strain Mu3 / ATCC 700698).